The primary structure comprises 224 residues: ATP-dependent dethiobiotin synthetase BioD (224 aa).

13–18 (NVGKTI) provides a ligand contact to ATP. T17 contacts Mg(2+). The active site involves K38. A substrate-binding site is contributed by S42. Residues D55, 116-119 (EGAG), 176-177 (NN), and N211 each bind ATP. Mg(2+)-binding residues include D55 and E116.

This sequence belongs to the dethiobiotin synthetase family. In terms of assembly, homodimer. Requires Mg(2+) as cofactor.

The protein resides in the cytoplasm. It catalyses the reaction (7R,8S)-7,8-diammoniononanoate + CO2 + ATP = (4R,5S)-dethiobiotin + ADP + phosphate + 3 H(+). It functions in the pathway cofactor biosynthesis; biotin biosynthesis; biotin from 7,8-diaminononanoate: step 1/2. Functionally, catalyzes a mechanistically unusual reaction, the ATP-dependent insertion of CO2 between the N7 and N8 nitrogen atoms of 7,8-diaminopelargonic acid (DAPA, also called 7,8-diammoniononanoate) to form a ureido ring. The protein is ATP-dependent dethiobiotin synthetase BioD of Buchnera aphidicola subsp. Acyrthosiphon pisum (strain 5A).